The chain runs to 242 residues: Probable transcriptional regulatory protein LBA0733 (242 aa).

The disordered stretch occupies residues 1–22 (MSGHSKWHNIQGRKNAQDAKRG).

It belongs to the TACO1 family.

It localises to the cytoplasm. This Lactobacillus acidophilus (strain ATCC 700396 / NCK56 / N2 / NCFM) protein is Probable transcriptional regulatory protein LBA0733.